Consider the following 85-residue polypeptide: RNA-binding protein Hfq (85 aa).

The Sm domain occupies 9–68 (DPFLNALRRERIPVSIYLVNGIKLQGQIESFDQFVILLKNTVNQMVYKHAISTVVPARPV). Residues 66-85 (RPVNHHHASDRPATLEKTEE) form a disordered region. The span at 72 to 85 (HASDRPATLEKTEE) shows a compositional bias: basic and acidic residues.

Belongs to the Hfq family. Homohexamer.

RNA chaperone that binds small regulatory RNA (sRNAs) and mRNAs to facilitate mRNA translational regulation in response to envelope stress, environmental stress and changes in metabolite concentrations. Also binds with high specificity to tRNAs. This chain is RNA-binding protein Hfq, found in Photobacterium profundum (strain SS9).